A 257-amino-acid polypeptide reads, in one-letter code: Thiazole synthase (257 aa).

Lysine 98 (schiff-base intermediate with DXP) is an active-site residue. 1-deoxy-D-xylulose 5-phosphate-binding positions include glycine 159, 185 to 186 (AG), and 207 to 208 (NT).

The protein belongs to the ThiG family. Homotetramer. Forms heterodimers with either ThiH or ThiS.

The protein localises to the cytoplasm. It carries out the reaction [ThiS sulfur-carrier protein]-C-terminal-Gly-aminoethanethioate + 2-iminoacetate + 1-deoxy-D-xylulose 5-phosphate = [ThiS sulfur-carrier protein]-C-terminal Gly-Gly + 2-[(2R,5Z)-2-carboxy-4-methylthiazol-5(2H)-ylidene]ethyl phosphate + 2 H2O + H(+). Its pathway is cofactor biosynthesis; thiamine diphosphate biosynthesis. Its function is as follows. Catalyzes the rearrangement of 1-deoxy-D-xylulose 5-phosphate (DXP) to produce the thiazole phosphate moiety of thiamine. Sulfur is provided by the thiocarboxylate moiety of the carrier protein ThiS. In vitro, sulfur can be provided by H(2)S. The sequence is that of Thiazole synthase from Anaeromyxobacter sp. (strain Fw109-5).